We begin with the raw amino-acid sequence, 261 residues long: Ribonuclease PH (261 aa).

Residues arginine 87 and 125-127 contribute to the phosphate site; that span reads GTR.

The protein belongs to the RNase PH family. As to quaternary structure, homohexameric ring arranged as a trimer of dimers.

It catalyses the reaction tRNA(n+1) + phosphate = tRNA(n) + a ribonucleoside 5'-diphosphate. In terms of biological role, phosphorolytic 3'-5' exoribonuclease that plays an important role in tRNA 3'-end maturation. Removes nucleotide residues following the 3'-CCA terminus of tRNAs; can also add nucleotides to the ends of RNA molecules by using nucleoside diphosphates as substrates, but this may not be physiologically important. Probably plays a role in initiation of 16S rRNA degradation (leading to ribosome degradation) during starvation. This Thermoanaerobacter pseudethanolicus (strain ATCC 33223 / 39E) (Clostridium thermohydrosulfuricum) protein is Ribonuclease PH.